Reading from the N-terminus, the 865-residue chain is Xylosyltransferase 2 (865 aa).

Residues 1 to 15 lie on the Cytoplasmic side of the membrane; the sequence is MVASARVQKLVRRYK. The helical; Signal-anchor for type II membrane protein transmembrane segment at 16–36 threads the bilayer; the sequence is LAIATALAILLLQGLVVWSFS. The Lumenal segment spans residues 37–865; it reads GLEEDEPGEK…GPVKADGRLR (829 aa). Positions 39–155 are disordered; sequence EEDEPGEKGR…SVEGAPQPTD (117 aa). The segment covering 53–65 has biased composition (basic and acidic residues); the sequence is RPLDPGEGSKDTD. Residues 73-82 are compositionally biased toward basic residues; sequence SAGRRHGRWR. N-linked (GlcNAc...) asparagine glycosylation is present at N122. Intrachain disulfides connect C162–C190, C206–C448, C467–C480, and C469–C478. Residues V239, D267, and 296–298 each bind UDP-alpha-D-xylose; that span reads TIW. N327 carries an N-linked (GlcNAc...) asparagine glycan. 400-401 contacts UDP-alpha-D-xylose; the sequence is DW. Residues S481 and 504-505 contribute to the UDP-alpha-D-xylose site; that span reads RK. 2 cysteine pairs are disulfide-bonded: C581-C833 and C826-C839. N-linked (GlcNAc...) asparagine glycosylation occurs at N683.

Belongs to the glycosyltransferase 14 family. XylT subfamily. As to quaternary structure, monomer. Mg(2+) is required as a cofactor. The cofactor is Mn(2+). Post-translationally, contains disulfide bonds. In terms of tissue distribution, detected in brain, liver, lung, kidney, heart, spleen and testis, and at lower levels in skeletal muscle.

The protein resides in the golgi apparatus membrane. It is found in the secreted. It carries out the reaction UDP-alpha-D-xylose + L-seryl-[protein] = 3-O-(beta-D-xylosyl)-L-seryl-[protein] + UDP + H(+). Its pathway is glycan metabolism; chondroitin sulfate biosynthesis. It functions in the pathway glycan metabolism; heparan sulfate biosynthesis. Its function is as follows. Catalyzes the first step in the biosynthesis of chondroitin sulfate, heparan sulfate and dermatan sulfate proteoglycans, such as DCN. Transfers D-xylose from UDP-D-xylose to specific serine residues of the core protein. The chain is Xylosyltransferase 2 (Xylt2) from Mus musculus (Mouse).